A 347-amino-acid polypeptide reads, in one-letter code: UDP-3-O-acylglucosamine N-acyltransferase (347 aa).

The active-site Proton acceptor is the histidine 241.

The protein belongs to the transferase hexapeptide repeat family. LpxD subfamily. In terms of assembly, homotrimer.

It catalyses the reaction a UDP-3-O-[(3R)-3-hydroxyacyl]-alpha-D-glucosamine + a (3R)-hydroxyacyl-[ACP] = a UDP-2-N,3-O-bis[(3R)-3-hydroxyacyl]-alpha-D-glucosamine + holo-[ACP] + H(+). It functions in the pathway bacterial outer membrane biogenesis; LPS lipid A biosynthesis. Functionally, catalyzes the N-acylation of UDP-3-O-acylglucosamine using 3-hydroxyacyl-ACP as the acyl donor. Is involved in the biosynthesis of lipid A, a phosphorylated glycolipid that anchors the lipopolysaccharide to the outer membrane of the cell. This is UDP-3-O-acylglucosamine N-acyltransferase from Nitrosococcus oceani (strain ATCC 19707 / BCRC 17464 / JCM 30415 / NCIMB 11848 / C-107).